Consider the following 389-residue polypeptide: Probable inactive purple acid phosphatase 29 (389 aa).

The first 34 residues, 1–34 (MADNRRRRSLFDFLLFSVFLGLACLCLSPIPATA), serve as a signal peptide directing secretion. Residue N80 is glycosylated (N-linked (GlcNAc...) asparagine). N136 contributes to the substrate binding site. N136 contacts Zn(2+). Residues N191 and N267 are each glycosylated (N-linked (GlcNAc...) asparagine). H303 provides a ligand contact to Zn(2+). Residue 303–305 (HDH) participates in substrate binding. H305 provides a ligand contact to Fe cation. A glycan (N-linked (GlcNAc...) asparagine) is linked at N380.

This sequence belongs to the metallophosphoesterase superfamily. Purple acid phosphatase family. As to quaternary structure, homodimer. Requires Fe cation as cofactor. Zn(2+) serves as cofactor. As to expression, expressed in roots, stems, leaves, flowers and siliques.

The protein resides in the secreted. The chain is Probable inactive purple acid phosphatase 29 (PAP29) from Arabidopsis thaliana (Mouse-ear cress).